The following is a 461-amino-acid chain: GTPase Der (461 aa).

2 consecutive EngA-type G domains span residues 9–171 and 200–371; these read KTIA…NLNK and IQVG…ECFS. GTP contacts are provided by residues 15-22, 62-66, 123-126, 206-213, 253-257, and 317-320; these read GQPNVGKS, DTGGM, NKID, GRVNVGKS, DTAGI, and NKWD. One can recognise a KH-like domain in the interval 372–456; the sequence is KRIPTSLLNS…PLILNAKDKK (85 aa).

This sequence belongs to the TRAFAC class TrmE-Era-EngA-EngB-Septin-like GTPase superfamily. EngA (Der) GTPase family. As to quaternary structure, associates with the 50S ribosomal subunit.

In terms of biological role, GTPase that plays an essential role in the late steps of ribosome biogenesis. The polypeptide is GTPase Der (Helicobacter pylori (strain HPAG1)).